A 391-amino-acid polypeptide reads, in one-letter code: Alkanesulfonate monooxygenase (391 aa).

It belongs to the SsuD family.

The enzyme catalyses an alkanesulfonate + FMNH2 + O2 = an aldehyde + FMN + sulfite + H2O + 2 H(+). Functionally, catalyzes the desulfonation of aliphatic sulfonates. This is Alkanesulfonate monooxygenase from Rhodopseudomonas palustris (strain ATCC BAA-98 / CGA009).